Reading from the N-terminus, the 232-residue chain is Small ribosomal subunit protein uS2 (232 aa).

It belongs to the universal ribosomal protein uS2 family.

This chain is Small ribosomal subunit protein uS2, found in Carboxydothermus hydrogenoformans (strain ATCC BAA-161 / DSM 6008 / Z-2901).